Reading from the N-terminus, the 388-residue chain is Putrescine N-methyltransferase 1 (388 aa).

Composition is skewed to polar residues over residues 1–14, 23–39, and 46–88; these read MEVI…STIF, GYQN…QNGT, and HQNG…GNEL. The interval 1–88 is disordered; that stretch reads MEVISTNTNG…TISHDNGNEL (88 aa). The 238-residue stretch at 99-336 folds into the PABS domain; the sequence is PGWFSEFSAL…GVIGYMLCST (238 aa). Residues Gln-130, Glu-205, and 236-237 each bind S-adenosyl-L-methionine; that span reads DG. Asp-255 functions as the Proton acceptor in the catalytic mechanism. S-adenosyl-L-methionine is bound at residue Tyr-324.

This sequence belongs to the class I-like SAM-binding methyltransferase superfamily. Spermidine/spermine synthase family. In terms of tissue distribution, mainly expressed in roots.

It catalyses the reaction putrescine + S-adenosyl-L-methionine = N-methylputrescine + S-adenosyl-L-homocysteine + H(+). It functions in the pathway alkaloid biosynthesis; nicotine biosynthesis. Functionally, involved in the biosynthesis of pyridine alkaloid natural products, leading mainly to the production of anabasine, anatabine, nicotine and nornicotine, effective deterrents against herbivores with antiparasitic and pesticide properties (neurotoxins); nornicotine serves as the precursor in the synthesis of the carcinogen compound N'-nitrosonornicotine (NNN). Methyltransferase that mediates the conversion of putrescine to N-methylputrescine. This Nicotiana attenuata (Coyote tobacco) protein is Putrescine N-methyltransferase 1.